A 568-amino-acid polypeptide reads, in one-letter code: General O-oligosaccharyltransferase (568 aa).

Transmembrane regions (helical) follow at residues 17–37 (VAVM…LAWL), 46–66 (LTFA…ALFL), 78–98 (LALP…VVDF), 101–121 (ALLS…GYNL), 132–152 (FTLS…IACI), 176–196 (FAQP…CLYL), 214–234 (IVFA…LFFI), 251–271 (YAVL…PRFT), 349–369 (LLVW…LIWI), 376–396 (AKTT…IHTL), 397–417 (LEYP…MGLI), and 429–449 (VPVS…ALIW).

Belongs to the PglL O-oligosaccharyltransferase family.

The protein localises to the cell membrane. Functionally, catalyzes the O-glycosylation of multiple protein targets. Is responsible for general protein glycosylation within A.baylyi ADP1. Does not act as an O-antigen ligase. In Acinetobacter baylyi (strain ATCC 33305 / BD413 / ADP1), this protein is General O-oligosaccharyltransferase.